Here is a 237-residue protein sequence, read N- to C-terminus: 1-(5-phosphoribosyl)-5-[(5-phosphoribosylamino)methylideneamino] imidazole-4-carboxamide isomerase (237 aa).

The active-site Proton acceptor is the D8. The active-site Proton donor is D129.

This sequence belongs to the HisA/HisF family.

The protein resides in the cytoplasm. The catalysed reaction is 1-(5-phospho-beta-D-ribosyl)-5-[(5-phospho-beta-D-ribosylamino)methylideneamino]imidazole-4-carboxamide = 5-[(5-phospho-1-deoxy-D-ribulos-1-ylimino)methylamino]-1-(5-phospho-beta-D-ribosyl)imidazole-4-carboxamide. Its pathway is amino-acid biosynthesis; L-histidine biosynthesis; L-histidine from 5-phospho-alpha-D-ribose 1-diphosphate: step 4/9. This Acetivibrio thermocellus (strain ATCC 27405 / DSM 1237 / JCM 9322 / NBRC 103400 / NCIMB 10682 / NRRL B-4536 / VPI 7372) (Clostridium thermocellum) protein is 1-(5-phosphoribosyl)-5-[(5-phosphoribosylamino)methylideneamino] imidazole-4-carboxamide isomerase.